A 244-amino-acid chain; its full sequence is Prolactin-7D1 (244 aa).

Positions 1-30 are cleaved as a signal peptide; that stretch reads MLPSLIQPCSSGTLLMLLMSNLFLWEKVSS. 2 disulfide bridges follow: Cys99–Cys215 and Cys232–Cys240.

The protein belongs to the somatotropin/prolactin family.

The protein resides in the secreted. The chain is Prolactin-7D1 (Prl7d1) from Mus musculus (Mouse).